The chain runs to 2426 residues: Protein SON (2426 aa).

A2 bears the N-acetylalanine mark. K16 carries the post-translational modification N6-acetyllysine. Over residues 24-42 (LSSGRNEGQLNGETNTPIE) the composition is skewed to polar residues. The tract at residues 24 to 56 (LSSGRNEGQLNGETNTPIEGNQAGDAAASARSL) is disordered. K64 participates in a covalent cross-link: Glycyl lysine isopeptide (Lys-Gly) (interchain with G-Cter in SUMO2). Basic and acidic residues predominate over residues 77-88 (LRYKPDLKEGSR). A disordered region spans residues 77 to 155 (LRYKPDLKEG…GNIDLESDSF (79 aa)). S94 is subject to Phosphoserine. Basic residues predominate over residues 106 to 130 (KKSKKHKKHKNKKKKKKKEKEKKYK). Over residues 131–146 (RQPEESESKTKSHDDG) the composition is skewed to basic and acidic residues. Residues S142, S152, S154, S160, and S283 each carry the phosphoserine modification. Position 288 is an N6-acetyllysine (K288). The disordered stretch occupies residues 305–328 (TLVVSSETPTEVYPEPSTSTTMDF). Phosphothreonine is present on T400. A disordered region spans residues 406–442 (PGPSATPVPELPGPLSTPVPELPGPPATAVPELPGPS). Pro residues predominate over residues 409–442 (SATPVPELPGPLSTPVPELPGPPATAVPELPGPS). The segment at 726-895 (LASNTMDSQM…LASGTMDAQM (170 aa)) is 17 X 10 AA tandem repeats of L-A-[ST]-[NSG]-[TS]-MDSQM. The 11 X 7 AA tandem repeats of [DR]-P-Y-R-[LI][AG][QHP] stretch occupies residues 912–988 (DPYRLAQDPY…IAPRPYRLAP (77 aa)). An Omega-N-methylarginine modification is found at R950. T959 is modified (phosphothreonine). S998 is subject to Phosphoserine. 14 tandem repeats follow at residues 1006–1011 (ERSMMS), 1014–1019 (ERSMMS), 1021–1026 (ERSMMS), 1030–1035 (ERSMMS), 1038–1043 (ERSMMS), 1046–1051 (ERSMMS), 1055–1060 (ERSMMS), 1063–1068 (ERSMMS), 1071–1076 (ERSMMS), 1080–1085 (DRSMMS), 1089–1094 (DRSMMS), 1100–1105 (DRSMMS), 1111–1116 (DRSMMS), and 1121–1126 (DRSMMS). Residues 1006–1126 (ERSMMSSYER…SYTADRSMMS (121 aa)) form a 14 X 6 AA repeats of [ED]-R-S-M-M-S region. R1007 carries the asymmetric dimethylarginine modification. R1022 carries the asymmetric dimethylarginine modification. Phosphoserine is present on residues S1035 and S1043. 2 positions are modified to phosphoserine: S1060 and S1068. Phosphoserine is present on S1082. The segment at 1144 to 1236 (YMVPPLPPEE…PTDYSVSASD (93 aa)) is disordered. Positions 1147 to 1179 (PPLPPEEPPTMPPLPPEEPPMTPPLPPEEPPEG) are 3 X 11 AA tandem repats of P-P-L-P-P-E-E-P-P-[TME]-[MTG]. The span at 1147–1180 (PPLPPEEPPTMPPLPPEEPPMTPPLPPEEPPEGP) shows a compositional bias: pro residues. Positions 1186–1196 (QSALTAENTWP) are enriched in polar residues. A compositionally biased stretch (low complexity) spans 1198–1224 (EVPSSPSEESVSQPEPPVSQSEISEPS). The interval 1359 to 1390 (VLESSAVTVLESSTVTVLESSTVTVLEPSVVT) is 4 X 8 AA tandem repeats of V-L-E-SS-[AVT]-VT. Phosphoserine occurs at positions 1556 and 1651. The interval 1645–1722 (TSPSGGSEAD…KETLPDSGFS (78 aa)) is disordered. The span at 1677–1689 (KDTEEPLPVKESD) shows a compositional bias: basic and acidic residues. A phosphoserine mark is found at S1697, S1701, S1747, S1759, S1766, S1769, S1782, and S1783. Residues 1754 to 2054 (GPLLASDVGR…RSPKRLTDLD (301 aa)) form a disordered region. Composition is skewed to basic and acidic residues over residues 1790–1801 (YEIFVKVKDTHE), 1809–1822 (RDKGEKEKKRDSSL), and 1830–1845 (KSSEHKSRKRTSESRS). Composition is skewed to basic residues over residues 1846-1909 (RARK…RKRS) and 1917-1948 (TVRARSRTPSRRSRSHTPSRRRRSRSVGRRRS). 9 tandem repeats follow at residues 1925–1931 (PSRRSRS), 1934–1952 (PSRRRRSRSVGRRRSFSIS), 1953–1959 (PSRRSRT), 1960–1966 (PSRRSRT), 1967–1973 (PSRRSRT), 1974–1980 (PSRRSRT), 1981–1987 (PSRRSRT), 1988–1994 (PSRRSRT), and 1995–2013 (PSRRRRSRSVVRRRSFSIS). The interval 1925–1994 (PSRRSRSHTP…SRTPSRRSRT (70 aa)) is 7 X 7 AA repeats of P-S-R-R-S-R-[TS]. The tract at residues 1934 to 2013 (PSRRRRSRSV…VVRRRSFSIS (80 aa)) is 2 X 19 AA repeats of P-S-R-R-R-R-S-R-S-V-V-R-R-R-S-F-S-I-S. A phosphoserine mark is found at S1948, S1950, and S1952. Over residues 1955–2009 (RRSRTPSRRSRTPSRRSRTPSRRSRTPSRRSRTPSRRSRTPSRRRRSRSVVRRRS) the composition is skewed to basic residues. 5 positions are modified to phosphoserine: S2009, S2011, S2013, S2029, and S2031. The tract at residues 2013-2039 (SPVRLRRSRTPLRRRFSRSPIRRKRSR) is 3 X tandem repeats of [ST]-P-[VLI]-R-[RL]-[RK]-[RF]-S-R. Residues 2016–2038 (RLRRSRTPLRRRFSRSPIRRKRS) are compositionally biased toward basic residues. Residues 2039–2054 (RSSERGRSPKRLTDLD) show a composition bias toward basic and acidic residues. Position 2055 is an N6-acetyllysine; alternate (K2055). K2055 is covalently cross-linked (Glycyl lysine isopeptide (Lys-Gly) (interchain with G-Cter in SUMO2); alternate). A Glycyl lysine isopeptide (Lys-Gly) (interchain with G-Cter in SUMO2) cross-link involves residue K2092. Phosphoserine is present on S2129. A Glycyl lysine isopeptide (Lys-Gly) (interchain with G-Cter in SUMO2) cross-link involves residue K2149. T2163 bears the Phosphothreonine mark. Residues 2200–2220 (KNGEENKDDDNVFSSNLPSEP) form a disordered region. S2238 bears the Phosphoserine mark. Residues 2305–2351 (TGGMGAVLMRKMGWREGEGLGKNKEGNKEPILVDFKTDRKGLVAVGE) form the G-patch domain. The 56-residue stretch at 2371–2426 (HPVSALMEICNKRRWQPPEFLLVHDSGPDHRKHFLFRVLRNGALTRPNCMFFLNRY) folds into the DRBM domain.

Interacts with SRSF2. Associates with the spliceosome. Interacts with the AML1-MTG8 (AML1-ETO) fusion protein, possibly leading to trigger signals inhibiting leukemogenesis. Interacts with USH1G. In terms of tissue distribution, widely expressed, with the higher expression seen in leukocyte and heart.

The protein resides in the nucleus speckle. Functionally, RNA-binding protein that acts as a mRNA splicing cofactor by promoting efficient splicing of transcripts that possess weak splice sites. Specifically promotes splicing of many cell-cycle and DNA-repair transcripts that possess weak splice sites, such as TUBG1, KATNB1, TUBGCP2, AURKB, PCNT, AKT1, RAD23A, and FANCG. Probably acts by facilitating the interaction between Serine/arginine-rich proteins such as SRSF2 and the RNA polymerase II. Also binds to DNA; binds to the consensus DNA sequence: 5'-GA[GT]AN[CG][AG]CC-3'. May indirectly repress hepatitis B virus (HBV) core promoter activity and transcription of HBV genes and production of HBV virions. Essential for correct RNA splicing of multiple genes critical for brain development, neuronal migration and metabolism, including TUBG1, FLNA, PNKP, WDR62, PSMD3, PCK2, PFKL, IDH2, and ACY1. This Homo sapiens (Human) protein is Protein SON (SON).